A 296-amino-acid polypeptide reads, in one-letter code: uncharacterized protein (296 aa).

The first 20 residues, 1 to 20, serve as a signal peptide directing secretion; the sequence is MKKALGILAILLILVGGYFA.

This is an uncharacterized protein from Aquifex aeolicus (strain VF5).